The primary structure comprises 175 residues: Arginine repressor (175 aa).

Residues 1–23 (MSVSTPERGGAEQGKGPAIARTR) form a disordered region.

Belongs to the ArgR family.

The protein resides in the cytoplasm. The protein operates within amino-acid biosynthesis; L-arginine biosynthesis [regulation]. In terms of biological role, regulates arginine biosynthesis genes. This Nocardia farcinica (strain IFM 10152) protein is Arginine repressor.